A 165-amino-acid polypeptide reads, in one-letter code: Putative pre-16S rRNA nuclease (165 aa).

Belongs to the YqgF nuclease family.

Its subcellular location is the cytoplasm. Its function is as follows. Could be a nuclease involved in processing of the 5'-end of pre-16S rRNA. This Sinorhizobium medicae (strain WSM419) (Ensifer medicae) protein is Putative pre-16S rRNA nuclease.